Consider the following 645-residue polypeptide: ATP-dependent zinc metalloprotease FtsH 1 (645 aa).

The Cytoplasmic portion of the chain corresponds to 1 to 6; that stretch reads MRSTQK. Residues 7 to 27 traverse the membrane as a helical segment; that stretch reads TLALWFFLIIMAVFLFQAYES. The Periplasmic segment spans residues 28 to 110; it reads KQQKAIADFN…NYERADNGGF (83 aa). The helical transmembrane segment at 111–131 threads the bilayer; it reads FQSLLVNWLPLILIVAMFLFI. At 132–645 the chain is on the cytoplasmic side; sequence MRQIQAGGGK…PVGNTGPVTI (514 aa). 203-210 contributes to the ATP binding site; sequence GSPGTGKT. Zn(2+) is bound at residue histidine 425. Residue glutamate 426 is part of the active site. Zn(2+)-binding residues include histidine 429 and aspartate 501.

This sequence in the central section; belongs to the AAA ATPase family. In the C-terminal section; belongs to the peptidase M41 family. Homohexamer. It depends on Zn(2+) as a cofactor.

The protein resides in the cell inner membrane. Functionally, acts as a processive, ATP-dependent zinc metallopeptidase for both cytoplasmic and membrane proteins. Plays a role in the quality control of integral membrane proteins. This is ATP-dependent zinc metalloprotease FtsH 1 from Bdellovibrio bacteriovorus (strain ATCC 15356 / DSM 50701 / NCIMB 9529 / HD100).